A 105-amino-acid polypeptide reads, in one-letter code: ATP-dependent Clp protease adapter protein ClpS (105 aa).

Positions 1–27 (MVVMSAPTEPKSRPGTTGQRESAPEDV) are disordered.

The protein belongs to the ClpS family. As to quaternary structure, binds to the N-terminal domain of the chaperone ClpA.

Its function is as follows. Involved in the modulation of the specificity of the ClpAP-mediated ATP-dependent protein degradation. This is ATP-dependent Clp protease adapter protein ClpS from Mycolicibacterium paratuberculosis (strain ATCC BAA-968 / K-10) (Mycobacterium paratuberculosis).